The following is a 104-amino-acid chain: Vacuolar ATPase assembly integral membrane protein VMA21 (104 aa).

Topologically, residues 1–21 (MSNRVSTGKMAMAPQESVQPA) are cytoplasmic. Residues 22 to 42 (VLYKLVLFALLMAVVPIGTYF) form a helical membrane-spanning segment. The Lumenal portion of the chain corresponds to 43–65 (STLNYLWDGASRCGFPSGLCSTT). A helical membrane pass occupies residues 66 to 86 (FAAISAIAAANLILVGYVVVA). Residues 87–104 (FREDAASRTGPLPEKKTS) are Cytoplasmic-facing. Positions 101-104 (KKTS) match the Prevents secretion from ER motif.

It belongs to the VMA21 family.

The protein resides in the endoplasmic reticulum membrane. It is found in the endoplasmic reticulum-Golgi intermediate compartment membrane. The protein localises to the cytoplasmic vesicle. It localises to the COPII-coated vesicle membrane. Functionally, required for the assembly of the V0 complex of the vacuolar ATPase (V-ATPase) in the endoplasmic reticulum. The polypeptide is Vacuolar ATPase assembly integral membrane protein VMA21 (Cryptococcus neoformans var. neoformans serotype D (strain B-3501A) (Filobasidiella neoformans)).